We begin with the raw amino-acid sequence, 308 residues long: Ribosomal RNA large subunit methyltransferase F (308 aa).

Belongs to the methyltransferase superfamily. METTL16/RlmF family.

It is found in the cytoplasm. It catalyses the reaction adenosine(1618) in 23S rRNA + S-adenosyl-L-methionine = N(6)-methyladenosine(1618) in 23S rRNA + S-adenosyl-L-homocysteine + H(+). Functionally, specifically methylates the adenine in position 1618 of 23S rRNA. The sequence is that of Ribosomal RNA large subunit methyltransferase F from Escherichia coli O127:H6 (strain E2348/69 / EPEC).